The primary structure comprises 1085 residues: Translation factor GUF1 homolog, mitochondrial (1085 aa).

A tr-type G domain is found at 232–409 (KYIRNFCILA…RIISDIPPPI (178 aa)). GTP is bound by residues 241-248 (AHIDSGKS), 302-306 (DTPGH), and 356-359 (NKID).

This sequence belongs to the TRAFAC class translation factor GTPase superfamily. Classic translation factor GTPase family. LepA subfamily.

It is found in the mitochondrion inner membrane. The catalysed reaction is GTP + H2O = GDP + phosphate + H(+). Functionally, promotes mitochondrial protein synthesis. May act as a fidelity factor of the translation reaction, by catalyzing a one-codon backward translocation of tRNAs on improperly translocated ribosomes. Binds to mitochondrial ribosomes in a GTP-dependent manner. The chain is Translation factor GUF1 homolog, mitochondrial from Plasmodium falciparum (isolate 3D7).